The chain runs to 832 residues: MHQLFRLVLGQKDLSRAGDLFSLDDAEIEDSLTEALEQIKVISSSLDYQTNNNDQAVVEICITRITTAIRETESIEKHARALVGLWDSCLEHNLRPAGKDEDTPHAKIASDIMSCILQNYNRTPVMVLAVPIAVKFLHRGSKELCRNMSNYLSLAAITKADLLADHTEGIVKSILQGNAMLLRVLPAVYEKQPQPINRHLAELLALMSQLEQTEQYHLLRLLHVAAKRKDVEVVQKCVPFLIRNLKESTYNDIILNILIEIAGHEPLALNSFLPMLKEIAEQFPYLTGQMARIFGAVGHVDEERARSCLRYLVSQLANMEHSFHHILLLEIKSLTDAFSSILGPHSRDIFRMSNSFTNIAKLLSRQLENSKAESGRRRTGTEVSFPEKFREPKTMEPKSEDHEKLQVKIQAFEDKINAESHTPGSVRRYSLDHVSKEERKNVRFSRSRSLALNTVLTNSVNVEDGEIEGKTGMHASISLSEIDPPGHGIGKVPFKTDTHGSQLRNSSASHPSIIHSEPENMPETFKENVQEEIPEAAISPVEYQDKLYLHLKENLSKVKAYALEIAKKVPIPDQCTIEDNTRSCVAKLFFTCSLKGHYCLYSKSSFTLVSQAPQPWIQIMFLFQQSLFPEPLSIQSGSVQFLKALWEKTQGTGTHSFEVAMTESTFPQQKDLDQLQLHLEEVRFFDVFGFSETAGAWQCFMCNNPEKATVINQDGQPLIEGKLKEKQVRWKFIKRWKTRYFTLAGNQLLFQKGKSDDPDDSPIELSKVQSVKAVAKKRRDRSLPRAFEIFTDNKTYVFKAKDEKNAEEWLQCINVALAQAKERESREVTTYL.

The segment at 201 to 319 (AELLALMSQL…RYLVSQLANM (119 aa)) is interaction with TGFBR1. The interval 497–519 (DTHGSQLRNSSASHPSIIHSEPE) is disordered. A compositionally biased stretch (polar residues) spans 499-510 (HGSQLRNSSASH). Residues 663-832 (ESTFPQQKDL…RESREVTTYL (170 aa)) are interaction with TGFBR1. The PH domain maps to 716–818 (QPLIEGKLKE…WLQCINVALA (103 aa)).

The protein belongs to the MELT/VEPH family. Interacts with TGFBR1.

Its subcellular location is the cell membrane. In terms of biological role, interacts with TGF-beta receptor type-1 (TGFBR1) and inhibits dissociation of activated SMAD2 from TGFBR1, impeding its nuclear accumulation and resulting in impaired TGF-beta signaling. May also affect FOXO, Hippo and Wnt signaling. This chain is Ventricular zone-expressed PH domain-containing protein homolog 1 (Veph1), found in Rattus norvegicus (Rat).